A 471-amino-acid chain; its full sequence is Putative multidrug resistance protein MdtD (471 aa).

At 1-11 (MTDLPDSTRWQ) the chain is on the periplasmic side. Residues 12–32 (LWIVAFGFFMQSLDTTIVNTA) form a helical membrane-spanning segment. Topologically, residues 33 to 48 (LPSMAQSLGESPLHMH) are cytoplasmic. Residues 49–69 (MVIVSYVLTVAVMLPASGWLA) form a helical membrane-spanning segment. The Periplasmic segment spans residues 70–76 (DKVGVRN). Residues 77–97 (IFFTAIVLFTLGSLFCALSGT) form a helical membrane-spanning segment. Residues 98-101 (LNEL) are Cytoplasmic-facing. A helical membrane pass occupies residues 102 to 124 (LLARALQGVGGAMMVPVGRLTVM). Over 125–137 (KIVPREQYMAAMT) the chain is Periplasmic. A helical transmembrane segment spans residues 138-158 (FVTLPGQVGPLLGPALGGLLV). The Cytoplasmic portion of the chain corresponds to 159-164 (EYASWH). The chain crosses the membrane as a helical span at residues 165-185 (WIFLINIPVGIIGAIATLMLM). At 186–196 (PNYTMQTRRFD) the chain is on the periplasmic side. The helical transmembrane segment at 197 to 217 (LSGFLLLAVGMAVLTLALDGS) threads the bilayer. Over 218–224 (KGTGLSP) the chain is Cytoplasmic. A helical membrane pass occupies residues 225-245 (LAITGLVAVGVVALVLYLLHA). Over 246–262 (RNNNRALFSLKLFRTRT) the chain is Periplasmic. A helical transmembrane segment spans residues 263 to 283 (FSLGLAGSFAGRIGSGMLPFM). At 284-285 (TP) the chain is on the cytoplasmic side. The chain crosses the membrane as a helical span at residues 286-306 (VFLQIGLGFSPFHAGLMMIPM). Over 307 to 341 (VLGSMGMKRIVVQVVNRFGYRRVLVATTLGLSLVT) the chain is Periplasmic. Residues 342–362 (LLFMTTALLGWYYVLPFVLFL) traverse the membrane as a helical segment. Topologically, residues 363-395 (QGMVNSTRFSSMNTLTLKDLPDNLASSGNSLLS) are cytoplasmic. A helical membrane pass occupies residues 396–416 (MIMQLSMSIGVTIAGLLLGLF). Over 417-430 (GSQHVSVDSSTTQT) the chain is Periplasmic. The chain crosses the membrane as a helical span at residues 431 to 451 (VFMYTWLSMAFIIALPAFIFA). Residues 452–471 (RVPNDTHQNVAISRRKRSAQ) lie on the Cytoplasmic side of the membrane.

The protein belongs to the major facilitator superfamily. TCR/Tet family.

Its subcellular location is the cell inner membrane. The protein is Putative multidrug resistance protein MdtD of Escherichia coli O157:H7.